Consider the following 1190-residue polypeptide: DNA-directed RNA polymerase subunit beta (1190 aa).

The interval 1155–1190 (ENFDDDDDHAPDAIMVDVKPAEREEAGEEKDAVTKE) is disordered. Residues 1173–1190 (KPAEREEAGEEKDAVTKE) are compositionally biased toward basic and acidic residues.

The protein belongs to the RNA polymerase beta chain family. As to quaternary structure, the RNAP catalytic core consists of 2 alpha, 1 beta, 1 beta' and 1 omega subunit. When a sigma factor is associated with the core the holoenzyme is formed, which can initiate transcription.

It carries out the reaction RNA(n) + a ribonucleoside 5'-triphosphate = RNA(n+1) + diphosphate. Its function is as follows. DNA-dependent RNA polymerase catalyzes the transcription of DNA into RNA using the four ribonucleoside triphosphates as substrates. The chain is DNA-directed RNA polymerase subunit beta from Geobacillus kaustophilus (strain HTA426).